Consider the following 862-residue polypeptide: DNA replication licensing factor MCM4 (862 aa).

Residues 1 to 10 are compositionally biased toward low complexity; sequence MSSPASTPSR. Disordered regions lie at residues 1–71 and 90–121; these read MSSP…FSSP and TYGTPSSRVEGTPRSGVRGTPVRQRPDLGSAR. An N-acetylserine modification is found at S2. S6 bears the Phosphoserine mark. Phosphothreonine occurs at positions 7 and 19. A phosphoserine mark is found at S26, S31, and S32. A compositionally biased stretch (polar residues) spans 61-71; sequence PPAQNALFSSP. Position 101 is a phosphothreonine (T101). Position 104 is a phosphoserine (S104). T109 is subject to Phosphothreonine. 4 positions are modified to phosphoserine: S119, S130, S141, and S144. K219 is modified (N6-acetyllysine). K438 participates in a covalent cross-link: Glycyl lysine isopeptide (Lys-Gly) (interchain with G-Cter in SUMO2). K449 carries the post-translational modification N6-acetyllysine. Positions 457–666 constitute an MCM domain; it reads IYERLASALA…YDRRLAHHLV (210 aa). Positions 470, 496, 515, 516, 617, 642, 731, and 734 each coordinate ATP. The Arginine finger motif lies at 641 to 644; that stretch reads SRFD. K797 participates in a covalent cross-link: Glycyl lysine isopeptide (Lys-Gly) (interchain with G-Cter in SUMO2). The residue at position 857 (K857) is an N6-acetyllysine.

The protein belongs to the MCM family. Component of the MCM2-7 complex. The complex forms a toroidal hexameric ring with the proposed subunit order MCM2-MCM6-MCM4-MCM7-MCM3-MCM5. Component of the CMG helicase complex, a hexameric ring of related MCM2-7 subunits stabilized by CDC45 and the tetrameric GINS complex. Interacts with MCMBP. Sumoylated; SUMO2 modified in response to stress caused by inhibition of proteasome activity (in vitro).

It localises to the nucleus. Its subcellular location is the chromosome. The catalysed reaction is ATP + H2O = ADP + phosphate + H(+). In terms of biological role, acts as a component of the MCM2-7 complex (MCM complex) which is the replicative helicase essential for 'once per cell cycle' DNA replication initiation and elongation in eukaryotic cells. Core component of CDC45-MCM-GINS (CMG) helicase, the molecular machine that unwinds template DNA during replication, and around which the replisome is built. The active ATPase sites in the MCM2-7 ring are formed through the interaction surfaces of two neighboring subunits such that a critical structure of a conserved arginine finger motif is provided in trans relative to the ATP-binding site of the Walker A box of the adjacent subunit. The six ATPase active sites, however, are likely to contribute differentially to the complex helicase activity. The chain is DNA replication licensing factor MCM4 (Mcm4) from Mus musculus (Mouse).